The following is a 248-amino-acid chain: Tryptophan synthase alpha chain (248 aa).

Catalysis depends on proton acceptor residues Glu36 and Asp47.

This sequence belongs to the TrpA family. Tetramer of two alpha and two beta chains.

It catalyses the reaction (1S,2R)-1-C-(indol-3-yl)glycerol 3-phosphate + L-serine = D-glyceraldehyde 3-phosphate + L-tryptophan + H2O. Its pathway is amino-acid biosynthesis; L-tryptophan biosynthesis; L-tryptophan from chorismate: step 5/5. Its function is as follows. The alpha subunit is responsible for the aldol cleavage of indoleglycerol phosphate to indole and glyceraldehyde 3-phosphate. The protein is Tryptophan synthase alpha chain of Pyrococcus abyssi (strain GE5 / Orsay).